The primary structure comprises 158 residues: UPF0262 protein RSKD131_1985 (158 aa).

Belongs to the UPF0262 family.

This Cereibacter sphaeroides (strain KD131 / KCTC 12085) (Rhodobacter sphaeroides) protein is UPF0262 protein RSKD131_1985.